Here is a 140-residue protein sequence, read N- to C-terminus: L-fucose mutarotase (140 aa).

Catalysis depends on histidine 22, which acts as the Proton donor. Substrate-binding positions include aspartate 30, arginine 107, and 129 to 131 (YGN).

This sequence belongs to the RbsD / FucU family. FucU mutarotase subfamily. As to quaternary structure, homodecamer.

The protein resides in the cytoplasm. The catalysed reaction is alpha-L-fucose = beta-L-fucose. It functions in the pathway carbohydrate metabolism; L-fucose metabolism. Its function is as follows. Involved in the anomeric conversion of L-fucose. This Salmonella arizonae (strain ATCC BAA-731 / CDC346-86 / RSK2980) protein is L-fucose mutarotase.